A 164-amino-acid polypeptide reads, in one-letter code: Lipoprotein signal peptidase (164 aa).

The next 3 helical transmembrane spans lie at 12–32 (WLWLVVVVLIIDLGSKYLILQ), 70–90 (WFFAGIAIGISVLLAVMMYRS), and 102–122 (ALIIGGALGNLFDRLWHGFVV). Active-site residues include Asp-123 and Asp-141. Residues 137–157 (FNLADTAICVGAALIVLEGFL) traverse the membrane as a helical segment.

Belongs to the peptidase A8 family.

The protein localises to the cell inner membrane. The catalysed reaction is Release of signal peptides from bacterial membrane prolipoproteins. Hydrolyzes -Xaa-Yaa-Zaa-|-(S,diacylglyceryl)Cys-, in which Xaa is hydrophobic (preferably Leu), and Yaa (Ala or Ser) and Zaa (Gly or Ala) have small, neutral side chains.. It participates in protein modification; lipoprotein biosynthesis (signal peptide cleavage). In terms of biological role, this protein specifically catalyzes the removal of signal peptides from prolipoproteins. This is Lipoprotein signal peptidase from Shigella flexneri.